The chain runs to 417 residues: Tyrosine--tRNA ligase (417 aa).

Tyrosine 39 serves as a coordination point for L-tyrosine. The short motif at 44–53 is the 'HIGH' region element; it reads ATATSLHIGN. 2 residues coordinate L-tyrosine: tyrosine 176 and glutamine 180. The short motif at 236-240 is the 'KMSKS' region element; the sequence is KMGKS. Lysine 239 contributes to the ATP binding site. An S4 RNA-binding domain is found at 350–416; the sequence is IGILSLLVTA…GKKKHVLVRP (67 aa).

Belongs to the class-I aminoacyl-tRNA synthetase family. TyrS type 1 subfamily. In terms of assembly, homodimer.

The protein localises to the cytoplasm. The enzyme catalyses tRNA(Tyr) + L-tyrosine + ATP = L-tyrosyl-tRNA(Tyr) + AMP + diphosphate + H(+). Its function is as follows. Catalyzes the attachment of tyrosine to tRNA(Tyr) in a two-step reaction: tyrosine is first activated by ATP to form Tyr-AMP and then transferred to the acceptor end of tRNA(Tyr). The chain is Tyrosine--tRNA ligase from Mesorhizobium japonicum (strain LMG 29417 / CECT 9101 / MAFF 303099) (Mesorhizobium loti (strain MAFF 303099)).